Here is a 138-residue protein sequence, read N- to C-terminus: Small ribosomal subunit protein bS6 (138 aa).

Residues 100 to 138 (SPLAKGREEDDSDSSARRARDDSDDDGDDDEDDRRASAD) are disordered. The segment covering 121–131 (DSDDDGDDDED) has biased composition (acidic residues).

This sequence belongs to the bacterial ribosomal protein bS6 family.

In terms of biological role, binds together with bS18 to 16S ribosomal RNA. The protein is Small ribosomal subunit protein bS6 of Thioalkalivibrio sulfidiphilus (strain HL-EbGR7).